The primary structure comprises 155 residues: SsrA-binding protein (155 aa).

The protein belongs to the SmpB family.

It localises to the cytoplasm. Its function is as follows. Required for rescue of stalled ribosomes mediated by trans-translation. Binds to transfer-messenger RNA (tmRNA), required for stable association of tmRNA with ribosomes. tmRNA and SmpB together mimic tRNA shape, replacing the anticodon stem-loop with SmpB. tmRNA is encoded by the ssrA gene; the 2 termini fold to resemble tRNA(Ala) and it encodes a 'tag peptide', a short internal open reading frame. During trans-translation Ala-aminoacylated tmRNA acts like a tRNA, entering the A-site of stalled ribosomes, displacing the stalled mRNA. The ribosome then switches to translate the ORF on the tmRNA; the nascent peptide is terminated with the 'tag peptide' encoded by the tmRNA and targeted for degradation. The ribosome is freed to recommence translation, which seems to be the essential function of trans-translation. This is SsrA-binding protein from Bordetella parapertussis (strain 12822 / ATCC BAA-587 / NCTC 13253).